The sequence spans 133 residues: Large ribosomal subunit protein eL32 (133 aa).

It belongs to the eukaryotic ribosomal protein eL32 family.

In Dictyostelium discoideum (Social amoeba), this protein is Large ribosomal subunit protein eL32 (rpl32).